Here is a 220-residue protein sequence, read N- to C-terminus: Sec-independent protein translocase protein TatB (220 aa).

The helical transmembrane segment at M1–G21 threads the bilayer. Positions V190 to Q220 are disordered.

Belongs to the TatB family. The Tat system comprises two distinct complexes: a TatABC complex, containing multiple copies of TatA, TatB and TatC subunits, and a separate TatA complex, containing only TatA subunits. Substrates initially bind to the TatABC complex, which probably triggers association of the separate TatA complex to form the active translocon.

It localises to the cell inner membrane. Its function is as follows. Part of the twin-arginine translocation (Tat) system that transports large folded proteins containing a characteristic twin-arginine motif in their signal peptide across membranes. Together with TatC, TatB is part of a receptor directly interacting with Tat signal peptides. TatB may form an oligomeric binding site that transiently accommodates folded Tat precursor proteins before their translocation. The protein is Sec-independent protein translocase protein TatB of Yersinia pseudotuberculosis serotype I (strain IP32953).